A 103-amino-acid chain; its full sequence is Large ribosomal subunit protein uL24 (103 aa).

Belongs to the universal ribosomal protein uL24 family. As to quaternary structure, part of the 50S ribosomal subunit.

Its function is as follows. One of two assembly initiator proteins, it binds directly to the 5'-end of the 23S rRNA, where it nucleates assembly of the 50S subunit. In terms of biological role, one of the proteins that surrounds the polypeptide exit tunnel on the outside of the subunit. This Halalkalibacterium halodurans (strain ATCC BAA-125 / DSM 18197 / FERM 7344 / JCM 9153 / C-125) (Bacillus halodurans) protein is Large ribosomal subunit protein uL24.